A 378-amino-acid polypeptide reads, in one-letter code: GTPase Obg (378 aa).

The Obg domain maps to 1-159 (MKFVDEATIE…RRLRLELKVL (159 aa)). Residues 160–336 (ADVGLLGLPN…LIWALQDYLD (177 aa)) form the OBG-type G domain. GTP contacts are provided by residues 166–173 (GLPNAGKS), 191–195 (FTTLH), 213–216 (DIPG), 288–291 (NKLD), and 317–319 (SGL). Residues Ser-173 and Thr-193 each contribute to the Mg(2+) site. The segment at 345-378 (AQDQADGTYVAEDPRFDATRSDAAPPGAPRGGDE) is disordered.

Belongs to the TRAFAC class OBG-HflX-like GTPase superfamily. OBG GTPase family. As to quaternary structure, monomer. It depends on Mg(2+) as a cofactor.

It is found in the cytoplasm. In terms of biological role, an essential GTPase which binds GTP, GDP and possibly (p)ppGpp with moderate affinity, with high nucleotide exchange rates and a fairly low GTP hydrolysis rate. Plays a role in control of the cell cycle, stress response, ribosome biogenesis and in those bacteria that undergo differentiation, in morphogenesis control. In Bordetella petrii (strain ATCC BAA-461 / DSM 12804 / CCUG 43448), this protein is GTPase Obg.